Reading from the N-terminus, the 238-residue chain is MSSYQQKQPFVPPPQPEQHQVKQPCQPPPQGKFVPIATSEPCHTDVPQPGNTKIPEPCSTKVPEPGNTVVLEPDYTTMPGPCSTNITEPDYTTIPGPCSTNITEPDYTTIPGPCSTNIPGPDRTVVPGSCSTNITEPDYTTIPGPSSTKIPDPGCAMVPGPSPSSTSEPSSEPCSINVREPGYMNASEPTHAKVPDQGYTKIPDQGSSKVPEPCQSRVPEVCPPTVTPVSAKQKTKQK.

Residues 1-67 (MSSYQQKQPF…CSTKVPEPGN (67 aa)) are disordered. The residue at position 2 (serine 2) is an N-acetylserine. A run of 21 repeats spans residues 52-59 (TKIPEPCS), 60-67 (TKVPEPGN), 68-75 (TVVLEPDY), 76-83 (TTMPGPCS), 84-91 (TNITEPDY), 92-99 (TTIPGPCS), 100-107 (TNITEPDY), 108-115 (TTIPGPCS), 116-123 (TNIPGPDR), 124-131 (TVVPGSCS), 132-139 (TNITEPDY), 140-147 (TTIPGPSS), 148-155 (TKIPDPGC), 156-163 (AMVPGPSP), 164-175 (SSTSEPSSEPCS), 176-183 (INVREPGY), 184-191 (MNASEPTH), 192-199 (AKVPDQGY), 200-207 (TKIPDQGS), 208-215 (SKVPEPCQ), and 216-223 (SRVPEVCP). The segment at 52-223 (TKIPEPCSTK…CQSRVPEVCP (172 aa)) is 21 X 8 AA approximate tandem repeats. The segment at 110–238 (IPGPCSTNIP…VSAKQKTKQK (129 aa)) is disordered. Low complexity predominate over residues 163–175 (PSSTSEPSSEPCS).

Belongs to the cornifin (SPRR) family.

The protein localises to the cytoplasm. Cross-linked envelope protein of keratinocytes. This is Small proline-rich protein 3 (Sprr3) from Mus musculus (Mouse).